The sequence spans 110 residues: Mite allergen Lep d 5 (110 aa).

This sequence belongs to the mite group 5 allergen family.

In Lepidoglyphus destructor (Storage mite), this protein is Mite allergen Lep d 5.